The sequence spans 267 residues: Ribosomal RNA small subunit methyltransferase J (267 aa).

S-adenosyl-L-methionine contacts are provided by residues 133 to 134 (ER) and D187.

The protein belongs to the methyltransferase superfamily. RsmJ family.

The protein localises to the cytoplasm. The catalysed reaction is guanosine(1516) in 16S rRNA + S-adenosyl-L-methionine = N(2)-methylguanosine(1516) in 16S rRNA + S-adenosyl-L-homocysteine + H(+). Functionally, specifically methylates the guanosine in position 1516 of 16S rRNA. The chain is Ribosomal RNA small subunit methyltransferase J from Halorhodospira halophila (strain DSM 244 / SL1) (Ectothiorhodospira halophila (strain DSM 244 / SL1)).